A 230-amino-acid polypeptide reads, in one-letter code: Response regulator MprA (230 aa).

The Response regulatory domain occupies 4–118 (RILVVDDDRA…ELLARMRALL (115 aa)). At D48 the chain carries 4-aspartylphosphate. The segment at residues 129–227 (SPALTFLDLT…VRGVGYVLRE (99 aa)) is a DNA-binding region (ompR/PhoB-type).

Phosphorylated and dephosphorylated by MprB.

The protein resides in the cytoplasm. In terms of biological role, member of the two-component regulatory system MprB/MprA which contributes to maintaining a balance among several systems involved in stress resistance and is required for establishment and maintenance of persistent infection in the host. Functions as a transcriptional regulator that recognizes a 19-bp nucleotide motif comprizing two loosely conserved 8-bp direct DNA-binding motif repeats separated by a 3-bp spacer region. This is Response regulator MprA (mprA) from Mycobacterium sp. (strain JLS).